We begin with the raw amino-acid sequence, 338 residues long: Malate dehydrogenase, mitochondrial (338 aa).

Residues 1–24 (MLSALARPAGAALRRSFSTSAQNN) constitute a mitochondrion transit peptide. NAD(+)-binding positions include 31–37 (GASGGIG) and Asp-57. The O-linked (GlcNAc) serine glycan is linked to Ser-33. N6-acetyllysine; alternate occurs at positions 78 and 91. 2 positions are modified to N6-succinyllysine; alternate: Lys-78 and Lys-91. 2 residues coordinate substrate: Arg-104 and Arg-110. NAD(+) contacts are provided by residues Asn-117 and 140-142 (IAN). Asn-142 is a binding site for substrate. An N6-acetyllysine modification is found at Lys-165. Arg-176 is a substrate binding site. N6-acetyllysine; alternate is present on Lys-185. Lys-185 carries the post-translational modification N6-succinyllysine; alternate. The active-site Proton acceptor is His-200. At Lys-203 the chain carries N6-succinyllysine. N6-acetyllysine; alternate occurs at positions 215 and 239. N6-succinyllysine; alternate is present on residues Lys-215 and Lys-239. The residue at position 239 (Lys-239) is an N6-malonyllysine; alternate. Phosphoserine is present on Ser-246. Met-251 contacts NAD(+). Lys-269 carries the post-translational modification N6-succinyllysine. N6-acetyllysine; alternate occurs at positions 296, 301, and 307. An N6-succinyllysine; alternate mark is found at Lys-296, Lys-301, and Lys-307. Lys-307 bears the N6-malonyllysine; alternate mark. The residue at position 309 (Thr-309) is a Phosphothreonine. An N6-acetyllysine; alternate mark is found at Lys-314 and Lys-324. 2 positions are modified to N6-succinyllysine; alternate: Lys-314 and Lys-324. Residue Ser-326 is modified to Phosphoserine. Residues Lys-328, Lys-329, and Lys-335 each carry the N6-acetyllysine; alternate modification. Lys-328 is subject to N6-succinyllysine; alternate. Position 329 is an N6-malonyllysine; alternate (Lys-329). N6-succinyllysine; alternate is present on Lys-335.

Belongs to the LDH/MDH superfamily. MDH type 1 family. As to quaternary structure, homodimer. Post-translationally, acetylation is enhanced after treatment either with trichostin A (TCA) or with nicotinamide (NAM) with the appearance of tri- and tetraacetylations. Glucose also increases acetylation. Acetylation of Lys-239 and Lys-314 is observed in liver mitochondria from fasted mice but not from fed mice.

Its subcellular location is the mitochondrion matrix. The enzyme catalyses (S)-malate + NAD(+) = oxaloacetate + NADH + H(+). Its activity is regulated as follows. Enzyme activity is enhanced by acetylation. This is Malate dehydrogenase, mitochondrial (Mdh2) from Mus musculus (Mouse).